The following is a 473-amino-acid chain: Bifunctional protein HldE (473 aa).

Residues 1-318 (MKLSMPRFDQ…RAIQREEGSE (318 aa)) form a ribokinase region. 194 to 197 (NLSE) is a binding site for ATP. The active site involves Asp-263. A cytidylyltransferase region spans residues 343–473 (FTNGCFDILH…TAIVEKIRKN (131 aa)).

The protein in the N-terminal section; belongs to the carbohydrate kinase PfkB family. This sequence in the C-terminal section; belongs to the cytidylyltransferase family. Homodimer.

The enzyme catalyses D-glycero-beta-D-manno-heptose 7-phosphate + ATP = D-glycero-beta-D-manno-heptose 1,7-bisphosphate + ADP + H(+). The catalysed reaction is D-glycero-beta-D-manno-heptose 1-phosphate + ATP + H(+) = ADP-D-glycero-beta-D-manno-heptose + diphosphate. It participates in nucleotide-sugar biosynthesis; ADP-L-glycero-beta-D-manno-heptose biosynthesis; ADP-L-glycero-beta-D-manno-heptose from D-glycero-beta-D-manno-heptose 7-phosphate: step 1/4. The protein operates within nucleotide-sugar biosynthesis; ADP-L-glycero-beta-D-manno-heptose biosynthesis; ADP-L-glycero-beta-D-manno-heptose from D-glycero-beta-D-manno-heptose 7-phosphate: step 3/4. Its function is as follows. Catalyzes the phosphorylation of D-glycero-D-manno-heptose 7-phosphate at the C-1 position to selectively form D-glycero-beta-D-manno-heptose-1,7-bisphosphate. In terms of biological role, catalyzes the ADP transfer from ATP to D-glycero-beta-D-manno-heptose 1-phosphate, yielding ADP-D-glycero-beta-D-manno-heptose. This is Bifunctional protein HldE from Pseudomonas putida (strain ATCC 47054 / DSM 6125 / CFBP 8728 / NCIMB 11950 / KT2440).